We begin with the raw amino-acid sequence, 906 residues long: Coatomer subunit beta' (906 aa).

WD repeat units lie at residues 13-52 (ARSD…LVKT), 55-94 (VCDL…RVHM), 97-136 (AHSD…SCSQ), 140-180 (GHTH…PNFT), 183-224 (GHEK…CVQT), 227-266 (GHAQ…LEST), 350-388 (SCEI…NKSF), and 390-425 (SAQE…KSFK). At lysine 627 the chain carries N6-acetyllysine. Residues 746–783 (IRTGRLPEAAFLARTYLPSQVSRVVKLWRENLSKVNQK) form a WD 9 repeat. The disordered stretch occupies residues 837 to 863 (EEAKGFQPSRSTAQQELDGKPASPTPV). Serine 859 is modified (phosphoserine). Threonine 861 is modified (phosphothreonine). Positions 866 to 890 (ASHTANKEEKSLLELEVDLDNLELV) form a coiled coil.

It belongs to the WD repeat COPB2 family. In terms of assembly, oligomeric complex that consists of at least the alpha, beta, beta', gamma, delta, epsilon and zeta subunits. Probably interacts with PEX11A. Interacts with SCYL1. Interacts with JAGN1.

The protein localises to the cytoplasm. The protein resides in the cytosol. It is found in the golgi apparatus membrane. Its subcellular location is the cytoplasmic vesicle. It localises to the COPI-coated vesicle membrane. In terms of biological role, the coatomer is a cytosolic protein complex that binds to dilysine motifs and reversibly associates with Golgi non-clathrin-coated vesicles, which further mediate biosynthetic protein transport from the ER, via the Golgi up to the trans Golgi network. Coatomer complex is required for budding from Golgi membranes, and is essential for the retrograde Golgi-to-ER transport of dilysine-tagged proteins. In mammals, the coatomer can only be recruited by membranes associated to ADP-ribosylation factors (ARFs), which are small GTP-binding proteins; the complex also influences the Golgi structural integrity, as well as the processing, activity, and endocytic recycling of LDL receptors. Functionally, this coatomer complex protein, essential for Golgi budding and vesicular trafficking, is a selective binding protein (RACK) for protein kinase C, epsilon type. It binds to Golgi membranes in a GTP-dependent manner. In Pongo abelii (Sumatran orangutan), this protein is Coatomer subunit beta' (COPB2).